Consider the following 318-residue polypeptide: B3 domain-containing protein At1g05930 (318 aa).

Residues 201-293 (FNRLISNDFL…VLCFAMRQWR (93 aa)) constitute a DNA-binding region (TF-B3).

It is found in the nucleus. This chain is B3 domain-containing protein At1g05930, found in Arabidopsis thaliana (Mouse-ear cress).